Reading from the N-terminus, the 222-residue chain is Kinetochore protein Spc25 (222 aa).

Residues Arg-51–Ala-86 are a coiled coil.

It belongs to the SPC25 family. In terms of assembly, component of the Ndc80 complex, which is composed of Ndc80, Nuf2 and Spc25.

It is found in the nucleus. The protein localises to the chromosome. It localises to the centromere. The protein resides in the kinetochore. In terms of biological role, acts as a component of the essential kinetochore-associated Ndc80 complex, which is required for chromosome segregation and spindle checkpoint activity during meiosis and mitosis. Required for kinetochore integrity and the organization of stable microtubule binding sites in the outer plate of the kinetochore. Participates in SAC signaling that responds specifically to disruptions in spindle microtubule dynamics. The NDC80 complex synergistically enhances the affinity of the SKA1 complex for microtubules and may allow the NDC80 complex to track depolymerizing microtubules. The sequence is that of Kinetochore protein Spc25 from Drosophila simulans (Fruit fly).